Reading from the N-terminus, the 110-residue chain is T cell receptor alpha variable 39 (110 aa).

An N-terminal signal peptide occupies residues 1–18 (MKKLLAMILWLQLDRLSG). One can recognise an Ig-like domain in the interval 19–110 (ELKVEQNPLF…LSATYFCAVD (92 aa)). Residues asparagine 36 and asparagine 42 are each glycosylated (N-linked (GlcNAc...) asparagine). Cysteine 41 and cysteine 107 form a disulfide bridge.

Alpha-beta TR is a heterodimer composed of an alpha and beta chain; disulfide-linked. The alpha-beta TR is associated with the transmembrane signaling CD3 coreceptor proteins to form the TR-CD3 (TcR or TCR). The assembly of alpha-beta TR heterodimers with CD3 occurs in the endoplasmic reticulum where a single alpha-beta TR heterodimer associates with one CD3D-CD3E heterodimer, one CD3G-CD3E heterodimer and one CD247 homodimer forming a stable octameric structure. CD3D-CD3E and CD3G-CD3E heterodimers preferentially associate with TR alpha and TR beta chains, respectively. The association of the CD247 homodimer is the last step of TcR assembly in the endoplasmic reticulum and is required for transport to the cell surface.

The protein localises to the cell membrane. Functionally, v region of the variable domain of T cell receptor (TR) alpha chain that participates in the antigen recognition. Alpha-beta T cell receptors are antigen specific receptors which are essential to the immune response and are present on the cell surface of T lymphocytes. Recognize peptide-major histocompatibility (MH) (pMH) complexes that are displayed by antigen presenting cells (APC), a prerequisite for efficient T cell adaptive immunity against pathogens. Binding of alpha-beta TR to pMH complex initiates TR-CD3 clustering on the cell surface and intracellular activation of LCK that phosphorylates the ITAM motifs of CD3G, CD3D, CD3E and CD247 enabling the recruitment of ZAP70. In turn ZAP70 phosphorylates LAT, which recruits numerous signaling molecules to form the LAT signalosome. The LAT signalosome propagates signal branching to three major signaling pathways, the calcium, the mitogen-activated protein kinase (MAPK) kinase and the nuclear factor NF-kappa-B (NF-kB) pathways, leading to the mobilization of transcription factors that are critical for gene expression and essential for T cell growth and differentiation. The T cell repertoire is generated in the thymus, by V-(D)-J rearrangement. This repertoire is then shaped by intrathymic selection events to generate a peripheral T cell pool of self-MH restricted, non-autoaggressive T cells. Post-thymic interaction of alpha-beta TR with the pMH complexes shapes TR structural and functional avidity. This chain is T cell receptor alpha variable 39, found in Homo sapiens (Human).